A 584-amino-acid polypeptide reads, in one-letter code: Transcription factor 7-like 1 (584 aa).

Gly residues predominate over residues 1 to 28 (MPQLGGGRGGAGGGGGGSGAGATSGGDD). The CTNNB1-binding stretch occupies residues 1-71 (MPQLGGGRGG…VKSSLVNESE (71 aa)). Disordered stretches follow at residues 1–99 (MPQL…RDYF), 159–179 (ATVKDTRSPSPAHLSNKVPVV), and 194–231 (YSNDHFSPASPPTHLSPEIDPKTGIPRPPHPSELSPYY). A compositionally biased stretch (low complexity) spans 64-78 (SSLVNESENQSSSSD). The span at 80–99 (EAERRPQPARDAFQKPRDYF) shows a compositional bias: basic and acidic residues. The HMG box DNA-binding region spans 342-410 (VKKPLNAFML…LHAQLYPTWS (69 aa)). The disordered stretch occupies residues 412-501 (RDNYGKKKKR…HSEQAQPLSL (90 aa)). The Nuclear localization signal motif lies at 417–423 (KKKKRKR). Low complexity-rich tracts occupy residues 427 to 437 (LSQTQSQQQIQ) and 470 to 491 (SALDSPATPSAALASPAAPAAT). The span at 492–501 (HSEQAQPLSL) shows a compositional bias: polar residues.

This sequence belongs to the TCF/LEF family. In terms of assembly, binds the armadillo repeat of CTNNB1 and forms a stable complex. Interacts with DAZAP2. As to expression, detected in the basal layer of epidermis and in outer root sheath and bulge of hair follicles.

The protein localises to the nucleus. In terms of biological role, participates in the Wnt signaling pathway. Binds to DNA and acts as a repressor in the absence of CTNNB1, and as an activator in its presence. Necessary for the terminal differentiation of epidermal cells, the formation of keratohyalin granules and the development of the barrier function of the epidermis. In Mus musculus (Mouse), this protein is Transcription factor 7-like 1 (Tcf7l1).